Here is a 339-residue protein sequence, read N- to C-terminus: 4-hydroxy-2-oxovalerate aldolase 3 (339 aa).

In terms of domain architecture, Pyruvate carboxyltransferase spans 7-259 (IRVTDTSLRD…KTGIDFFAIA (253 aa)). 15-16 (RD) is a substrate binding site. D16 is a Mn(2+) binding site. H19 acts as the Proton acceptor in catalysis. Residues S169 and H198 each contribute to the substrate site. H198 and H200 together coordinate Mn(2+). Y289 serves as a coordination point for substrate.

The protein belongs to the 4-hydroxy-2-oxovalerate aldolase family.

It carries out the reaction (S)-4-hydroxy-2-oxopentanoate = acetaldehyde + pyruvate. The protein is 4-hydroxy-2-oxovalerate aldolase 3 of Rhodococcus opacus (strain B4).